Reading from the N-terminus, the 286-residue chain is NAD kinase (286 aa).

Asp68 serves as the catalytic Proton acceptor. NAD(+) contacts are provided by residues 68 to 69, Lys73, 142 to 143, Arg153, Asp172, 183 to 188, and Gln242; these read DG, ND, and TGYSFS.

The protein belongs to the NAD kinase family. It depends on a divalent metal cation as a cofactor.

It is found in the cytoplasm. The enzyme catalyses NAD(+) + ATP = ADP + NADP(+) + H(+). Functionally, involved in the regulation of the intracellular balance of NAD and NADP, and is a key enzyme in the biosynthesis of NADP. Catalyzes specifically the phosphorylation on 2'-hydroxyl of the adenosine moiety of NAD to yield NADP. In Natranaerobius thermophilus (strain ATCC BAA-1301 / DSM 18059 / JW/NM-WN-LF), this protein is NAD kinase.